Consider the following 248-residue polypeptide: MAGHSKWANIKHRKERQDAKRGKVFTKWIRELTVAAKQGGPDPASNPRLRLALDKALGANMSRDIIDRAVARGAGTNESDNVEELSYEGYGPGGVAIMVEAMTDNRNRTAAAVRHAFTKCGGNLGTDGSVAYLFERKGQISFAPGVEEDALMEAAMEADADDVVANDDGSFDVFTSFNSFYAVRNALEEAGFKAADAEIVMQPTTSAELDQDGAEKVLKLIDMLEDLDDVQNVYSNAQISDEIMENLG.

Residues 1-21 (MAGHSKWANIKHRKERQDAKR) are disordered.

The protein belongs to the TACO1 family.

Its subcellular location is the cytoplasm. In Pseudomonas putida (strain ATCC 47054 / DSM 6125 / CFBP 8728 / NCIMB 11950 / KT2440), this protein is Probable transcriptional regulatory protein PP_1214.